A 415-amino-acid polypeptide reads, in one-letter code: Gamma-glutamyl phosphate reductase (415 aa).

The protein belongs to the gamma-glutamyl phosphate reductase family.

The protein localises to the cytoplasm. It catalyses the reaction L-glutamate 5-semialdehyde + phosphate + NADP(+) = L-glutamyl 5-phosphate + NADPH + H(+). Its pathway is amino-acid biosynthesis; L-proline biosynthesis; L-glutamate 5-semialdehyde from L-glutamate: step 2/2. Its function is as follows. Catalyzes the NADPH-dependent reduction of L-glutamate 5-phosphate into L-glutamate 5-semialdehyde and phosphate. The product spontaneously undergoes cyclization to form 1-pyrroline-5-carboxylate. This is Gamma-glutamyl phosphate reductase from Bacillus cereus (strain AH187).